The chain runs to 79 residues: ATP synthase subunit c (79 aa).

2 consecutive transmembrane segments (helical) span residues 11–31 (IAAA…IGIL) and 53–73 (FFIV…LSLY).

The protein belongs to the ATPase C chain family. In terms of assembly, F-type ATPases have 2 components, F(1) - the catalytic core - and F(0) - the membrane proton channel. F(1) has five subunits: alpha(3), beta(3), gamma(1), delta(1), epsilon(1). F(0) has three main subunits: a(1), b(2) and c(10-14). The alpha and beta chains form an alternating ring which encloses part of the gamma chain. F(1) is attached to F(0) by a central stalk formed by the gamma and epsilon chains, while a peripheral stalk is formed by the delta and b chains.

It is found in the cell inner membrane. F(1)F(0) ATP synthase produces ATP from ADP in the presence of a proton or sodium gradient. F-type ATPases consist of two structural domains, F(1) containing the extramembraneous catalytic core and F(0) containing the membrane proton channel, linked together by a central stalk and a peripheral stalk. During catalysis, ATP synthesis in the catalytic domain of F(1) is coupled via a rotary mechanism of the central stalk subunits to proton translocation. Functionally, key component of the F(0) channel; it plays a direct role in translocation across the membrane. A homomeric c-ring of between 10-14 subunits forms the central stalk rotor element with the F(1) delta and epsilon subunits. The polypeptide is ATP synthase subunit c (Blochmanniella floridana).